Here is a 520-residue protein sequence, read N- to C-terminus: Beta-glucosidase 45 (520 aa).

The signal sequence occupies residues 1–22 (MKNLTSFVIVILLQSLLFHVYG). N-linked (GlcNAc...) asparagine glycosylation is present at Asn-3. A beta-D-glucoside contacts are provided by residues Gln-52, His-155, and 200 to 201 (NE). Glu-201 (proton donor) is an active-site residue. Cysteines 220 and 227 form a disulfide. The N-linked (GlcNAc...) asparagine glycan is linked to Asn-226. Tyr-344 is an a beta-D-glucoside binding site. Cys-352 and Cys-357 are joined by a disulfide. Asn-378 carries N-linked (GlcNAc...) asparagine glycosylation. Glu-417 is a binding site for a beta-D-glucoside. Glu-417 (nucleophile) is an active-site residue. A glycan (N-linked (GlcNAc...) asparagine) is linked at Asn-435. A beta-D-glucoside is bound by residues Trp-466, 473–474 (EW), and Phe-482.

This sequence belongs to the glycosyl hydrolase 1 family. In terms of tissue distribution, expressed in stems and siliques.

The enzyme catalyses Hydrolysis of terminal, non-reducing beta-D-glucosyl residues with release of beta-D-glucose.. Hydrolyzes p-nitrophenyl beta-D-glucoside and natural glucosides such as syringin, coniferin and p-coumaryl alcohol glucoside. May be involved in lignification by hydrolyzing monolignol glucosides. The protein is Beta-glucosidase 45 of Arabidopsis thaliana (Mouse-ear cress).